The sequence spans 454 residues: Glutamyl-tRNA(Gln) amidotransferase subunit A (454 aa).

Residues Lys77 and Ser152 each act as charge relay system in the active site. The active-site Acyl-ester intermediate is the Ser176.

It belongs to the amidase family. GatA subfamily. In terms of assembly, heterotrimer of A, B and C subunits.

It carries out the reaction L-glutamyl-tRNA(Gln) + L-glutamine + ATP + H2O = L-glutaminyl-tRNA(Gln) + L-glutamate + ADP + phosphate + H(+). In terms of biological role, allows the formation of correctly charged Gln-tRNA(Gln) through the transamidation of misacylated Glu-tRNA(Gln) in organisms which lack glutaminyl-tRNA synthetase. The reaction takes place in the presence of glutamine and ATP through an activated gamma-phospho-Glu-tRNA(Gln). The polypeptide is Glutamyl-tRNA(Gln) amidotransferase subunit A (gatA) (Methanothermobacter thermautotrophicus (strain ATCC 29096 / DSM 1053 / JCM 10044 / NBRC 100330 / Delta H) (Methanobacterium thermoautotrophicum)).